A 489-amino-acid polypeptide reads, in one-letter code: Ketol-acid reductoisomerase (NADP(+)) (489 aa).

A KARI N-terminal Rossmann domain is found at 17–208 (LGVCEFMEQS…GGHKAGVLRS (192 aa)). Residues 45–48 (CGAQ), Arg68, Arg76, Ser78, and 108–110 (DKQ) contribute to the NADP(+) site. Residue His132 is part of the active site. Gly158 provides a ligand contact to NADP(+). KARI C-terminal knotted domains follow at residues 209–344 (SFVA…KTAP) and 345–485 (QEAP…MTAM). Residues Asp217, Glu221, Glu389, and Glu393 each coordinate Mg(2+). Ser414 lines the substrate pocket.

Belongs to the ketol-acid reductoisomerase family. The cofactor is Mg(2+).

It catalyses the reaction (2R)-2,3-dihydroxy-3-methylbutanoate + NADP(+) = (2S)-2-acetolactate + NADPH + H(+). It carries out the reaction (2R,3R)-2,3-dihydroxy-3-methylpentanoate + NADP(+) = (S)-2-ethyl-2-hydroxy-3-oxobutanoate + NADPH + H(+). The protein operates within amino-acid biosynthesis; L-isoleucine biosynthesis; L-isoleucine from 2-oxobutanoate: step 2/4. Its pathway is amino-acid biosynthesis; L-valine biosynthesis; L-valine from pyruvate: step 2/4. Involved in the biosynthesis of branched-chain amino acids (BCAA). Catalyzes an alkyl-migration followed by a ketol-acid reduction of (S)-2-acetolactate (S2AL) to yield (R)-2,3-dihydroxy-isovalerate. In the isomerase reaction, S2AL is rearranged via a Mg-dependent methyl migration to produce 3-hydroxy-3-methyl-2-ketobutyrate (HMKB). In the reductase reaction, this 2-ketoacid undergoes a metal-dependent reduction by NADPH to yield (R)-2,3-dihydroxy-isovalerate. The polypeptide is Ketol-acid reductoisomerase (NADP(+)) (Flavobacterium johnsoniae (strain ATCC 17061 / DSM 2064 / JCM 8514 / BCRC 14874 / CCUG 350202 / NBRC 14942 / NCIMB 11054 / UW101) (Cytophaga johnsonae)).